The following is an 85-amino-acid chain: U4-theraphotoxin-Hhn1a (85 aa).

An N-terminal signal peptide occupies residues 1-22 (MKMTLIAILTCAAVLVLHITAA). The propeptide occupies 23–48 (EELEAESQLMEVGMPDTELEAVDEER). Disulfide bonds link C52/C66, C56/C77, and C71/C82.

Belongs to the neurotoxin 12 (Hwtx-2) family. 02 (Hwtx-2) subfamily. In terms of assembly, monomer. Expressed by the venom gland.

It localises to the secreted. Its function is as follows. Neurotoxin active on both insects and mammals. The chain is U4-theraphotoxin-Hhn1a from Cyriopagopus hainanus (Chinese bird spider).